The chain runs to 406 residues: Acetate kinase (406 aa).

Asn10 contacts Mg(2+). An ATP-binding site is contributed by Lys17. Arg92 lines the substrate pocket. Asp151 functions as the Proton donor/acceptor in the catalytic mechanism. Residues 211-215, 286-288, and 335-339 each bind ATP; these read HLGSG, DFR, and GIGEN. Position 389 (Glu389) interacts with Mg(2+).

Belongs to the acetokinase family. In terms of assembly, homodimer. Requires Mg(2+) as cofactor. It depends on Mn(2+) as a cofactor.

The protein localises to the cytoplasm. It carries out the reaction acetate + ATP = acetyl phosphate + ADP. It functions in the pathway metabolic intermediate biosynthesis; acetyl-CoA biosynthesis; acetyl-CoA from acetate: step 1/2. Functionally, catalyzes the formation of acetyl phosphate from acetate and ATP. Can also catalyze the reverse reaction. The polypeptide is Acetate kinase (Buchnera aphidicola subsp. Cinara cedri (strain Cc)).